A 252-amino-acid polypeptide reads, in one-letter code: tRNA (guanine-N(7)-)-methyltransferase (252 aa).

E80, E105, D132, and D155 together coordinate S-adenosyl-L-methionine. D155 is an active-site residue. Substrate-binding positions include K159, D191, and 231-234 (TKFE).

It belongs to the class I-like SAM-binding methyltransferase superfamily. TrmB family.

It carries out the reaction guanosine(46) in tRNA + S-adenosyl-L-methionine = N(7)-methylguanosine(46) in tRNA + S-adenosyl-L-homocysteine. Its pathway is tRNA modification; N(7)-methylguanine-tRNA biosynthesis. Catalyzes the formation of N(7)-methylguanine at position 46 (m7G46) in tRNA. This chain is tRNA (guanine-N(7)-)-methyltransferase, found in Actinobacillus succinogenes (strain ATCC 55618 / DSM 22257 / CCUG 43843 / 130Z).